We begin with the raw amino-acid sequence, 877 residues long: Dolichyl-phosphate-mannose--protein mannosyltransferase 1 (877 aa).

N-linked (GlcNAc...) asparagine glycosylation occurs at asparagine 83. A run of 2 helical transmembrane segments spans residues 109-129 and 150-170; these read FFMD…GAIG and YIFM…LCYL. N-linked (GlcNAc...) asparagine glycosylation is present at asparagine 195. Helical transmembrane passes span 196–216, 226–246, 252–272, and 291–311; these read VTIS…AAAI, IPFT…LGLA, VGLF…WFLI, and IILL…HFQL. Positions 340–394 constitute an MIR 1 domain; the sequence is TEQVGLGSVVTIRHVDTQGGYLHSHEHFYQTGSKQQQITLYPHLDSNNKWLIEPY. N-linked (GlcNAc...) asparagine glycans are attached at residues asparagine 395 and asparagine 400. MIR domains lie at 403–462 and 472–528; these read FVPL…VEIV and QTFV…IETN. Helical transmembrane passes span 604–624, 643–663, 666–686, and 700–720; these read TWWA…VTVF, VQTF…FIMG, LFLH…GHFF, and FQQV…VFYV. Asparagine 721 is a glycosylation site (N-linked (GlcNAc...) asparagine). A disordered region spans residues 778–877; sequence VVEAKQTPKA…EDESVHQVQQ (100 aa). Basic and acidic residues-rich tracts occupy residues 783–799, 807–816, and 847–857; these read QTPK…DHIE, VEEKEVKEEV, and NDEKSVEEKQQ.

This sequence belongs to the glycosyltransferase 39 family. PMT1 and PMT2 form a functional heterodimer.

The protein localises to the endoplasmic reticulum membrane. The enzyme catalyses a di-trans,poly-cis-dolichyl beta-D-mannosyl phosphate + L-seryl-[protein] = 3-O-(alpha-D-mannosyl)-L-seryl-[protein] + a di-trans,poly-cis-dolichyl phosphate + H(+). The catalysed reaction is a di-trans,poly-cis-dolichyl beta-D-mannosyl phosphate + L-threonyl-[protein] = 3-O-(alpha-D-mannosyl)-L-threonyl-[protein] + a di-trans,poly-cis-dolichyl phosphate + H(+). The protein operates within protein modification; protein glycosylation. Its function is as follows. Protein mannosyltransferase (PMT) involved in hyphal growth and drug sensitivity. Transfers mannose from Dol-P-mannose to Ser or Thr residues on proteins. PMT1, PMT2 and PMT4 account for most of the protein-O-glycosylation activity, while PMT5 and PMT6 may specifically modulate a much narrower spectrum of target proteins. Accounts for the O-glycosylation of the cell wall proteins KRE9, PIR2, RHD3, and ALS1, as well as the SEC20 t-SNARE component. O-glycosylation of SEC20 is essential for its stability. Required for filamentation and early phases of biofilm formation. In Candida albicans (strain SC5314 / ATCC MYA-2876) (Yeast), this protein is Dolichyl-phosphate-mannose--protein mannosyltransferase 1 (PMT1).